Consider the following 251-residue polypeptide: uncharacterized protein (251 aa).

The tract at residues 1 to 22 is disordered; that stretch reads MTQLPELGLRSPNNKSPTGPHP.

This is an uncharacterized protein from Homo sapiens (Human).